Here is a 283-residue protein sequence, read N- to C-terminus: Phosphatidylserine decarboxylase proenzyme (283 aa).

Residues Asp-96, His-152, and Ser-250 each act as charge relay system; for autoendoproteolytic cleavage activity in the active site. Ser-250 acts as the Schiff-base intermediate with substrate; via pyruvic acid; for decarboxylase activity in catalysis. The residue at position 250 (Ser-250) is a Pyruvic acid (Ser); by autocatalysis.

The protein belongs to the phosphatidylserine decarboxylase family. PSD-B subfamily. Prokaryotic type I sub-subfamily. Heterodimer of a large membrane-associated beta subunit and a small pyruvoyl-containing alpha subunit. It depends on pyruvate as a cofactor. In terms of processing, is synthesized initially as an inactive proenzyme. Formation of the active enzyme involves a self-maturation process in which the active site pyruvoyl group is generated from an internal serine residue via an autocatalytic post-translational modification. Two non-identical subunits are generated from the proenzyme in this reaction, and the pyruvate is formed at the N-terminus of the alpha chain, which is derived from the carboxyl end of the proenzyme. The autoendoproteolytic cleavage occurs by a canonical serine protease mechanism, in which the side chain hydroxyl group of the serine supplies its oxygen atom to form the C-terminus of the beta chain, while the remainder of the serine residue undergoes an oxidative deamination to produce ammonia and the pyruvoyl prosthetic group on the alpha chain. During this reaction, the Ser that is part of the protease active site of the proenzyme becomes the pyruvoyl prosthetic group, which constitutes an essential element of the active site of the mature decarboxylase.

The protein localises to the cell membrane. It carries out the reaction a 1,2-diacyl-sn-glycero-3-phospho-L-serine + H(+) = a 1,2-diacyl-sn-glycero-3-phosphoethanolamine + CO2. It participates in phospholipid metabolism; phosphatidylethanolamine biosynthesis; phosphatidylethanolamine from CDP-diacylglycerol: step 2/2. Its function is as follows. Catalyzes the formation of phosphatidylethanolamine (PtdEtn) from phosphatidylserine (PtdSer). The protein is Phosphatidylserine decarboxylase proenzyme of Acinetobacter baumannii (strain ATCC 17978 / DSM 105126 / CIP 53.77 / LMG 1025 / NCDC KC755 / 5377).